The chain runs to 237 residues: Ribonuclease 3 (237 aa).

The RNase III domain occupies 4 to 133 (LTELEKSLGV…VLAAIYLDKG (130 aa)). Glu46 contacts Mg(2+). Active-site residues include Asp50 and Glu122. Glu122 contributes to the Mg(2+) binding site. One can recognise a DRBM domain in the interval 160–229 (DYKSRLQELV…AKEALQQFEN (70 aa)).

Belongs to the ribonuclease III family. As to quaternary structure, homodimer. Mg(2+) is required as a cofactor.

It localises to the cytoplasm. It carries out the reaction Endonucleolytic cleavage to 5'-phosphomonoester.. Digests double-stranded RNA. Involved in the processing of primary rRNA transcript to yield the immediate precursors to the large and small rRNAs (23S and 16S). Processes some mRNAs, and tRNAs when they are encoded in the rRNA operon. Processes pre-crRNA and tracrRNA of type II CRISPR loci if present in the organism. This Dehalococcoides mccartyi (strain ATCC BAA-2266 / KCTC 15142 / 195) (Dehalococcoides ethenogenes (strain 195)) protein is Ribonuclease 3.